The primary structure comprises 240 residues: Phosphoribosylaminoimidazole-succinocarboxamide synthase (240 aa).

Belongs to the SAICAR synthetase family.

The enzyme catalyses 5-amino-1-(5-phospho-D-ribosyl)imidazole-4-carboxylate + L-aspartate + ATP = (2S)-2-[5-amino-1-(5-phospho-beta-D-ribosyl)imidazole-4-carboxamido]succinate + ADP + phosphate + 2 H(+). Its pathway is purine metabolism; IMP biosynthesis via de novo pathway; 5-amino-1-(5-phospho-D-ribosyl)imidazole-4-carboxamide from 5-amino-1-(5-phospho-D-ribosyl)imidazole-4-carboxylate: step 1/2. This chain is Phosphoribosylaminoimidazole-succinocarboxamide synthase, found in Wolbachia sp. subsp. Drosophila simulans (strain wRi).